We begin with the raw amino-acid sequence, 156 residues long: C-type lectin lectoxin-Phi2 (156 aa).

Residues 1 to 23 (MGRFIFVSLGLLVLAFSLSGIGA) form the signal peptide. 3 cysteine pairs are disulfide-bonded: Cys27/Cys38, Cys55/Cys154, and Cys129/Cys146. One can recognise a C-type lectin domain in the interval 34–155 (HNVSCYKLIN…CNRRHRFLCK (122 aa)). 2 N-linked (GlcNAc...) asparagine glycosylation sites follow: Asn35 and Asn109. The Mannose-binding signature appears at 119–121 (EPN). Residues Glu127, Asn142, and Asp143 each contribute to the Ca(2+) site.

This sequence belongs to the true venom lectin family. Expressed by the venom gland.

The protein resides in the secreted. Its function is as follows. Mannose-binding lectin which recognizes specific carbohydrate structures and agglutinates a variety of animal cells by binding to cell-surface glycoproteins and glycolipids. May be a calcium-dependent lectin. In Philodryas olfersii (Green snake), this protein is C-type lectin lectoxin-Phi2.